The primary structure comprises 463 residues: Type IV secretion system protein PtlD homolog (463 aa).

The first 24 residues, 1–24 (MAGLSRILLSCTLACLLAGQAAQA), serve as a signal peptide directing secretion. Transmembrane regions (helical) follow at residues 118–138 (LQPL…YALL), 232–252 (WLLC…LAAS), 253–273 (LLIV…LFLV), 294–314 (ALVF…VLAG), and 333–353 (MLAA…VPLA). A compositionally biased stretch (low complexity) spans 376-410 (AHRQAAARQYAPRPAAAAAAAGPHQAGTYAASATP). Residues 376–463 (AHRQAAARQY…RVLPRKPNLP (88 aa)) form a disordered region. Over residues 411-420 (APAPARPAPS) the composition is skewed to pro residues. The span at 441–455 (VRRDDRPAPAPDRRV) shows a compositional bias: basic and acidic residues.

It localises to the cell membrane. The sequence is that of Type IV secretion system protein PtlD homolog (ptlD) from Bordetella parapertussis (strain 12822 / ATCC BAA-587 / NCTC 13253).